The following is an 87-amino-acid chain: Homeotic protein ultrabithorax (87 aa).

An Antp-type hexapeptide motif is present at residues 22–27 (FYPWMA).

Belongs to the Antp homeobox family. In terms of tissue distribution, in the embryo, expression is seen in the epidermis, somatic and visceral mesoderm, and the peripheral and central nervous system.

The protein localises to the nucleus. Functionally, sequence-specific transcription factor which is part of a developmental regulatory system that provides cells with specific positional identities on the anterior-posterior axis. Binds the consensus region 5'-TTAAT[GT][GA]-3'. This homeotic protein controls development of the cells in the posterior thoracic and first abdominal segments. It activates the synthesis of the decapentaplegic (DPP) growth factor. This is Homeotic protein ultrabithorax (Ubx) from Drosophila virilis (Fruit fly).